A 1003-amino-acid chain; its full sequence is UPF0182 protein Mkms_1433 (1003 aa).

Transmembrane regions (helical) follow at residues 18–38 (VLIG…RFID), 63–83 (VVVF…GLAL), 114–134 (LFGF…AQSY), 176–196 (FVAT…FGGI), 211–231 (IQLV…YWLD), 260–280 (KLIL…AIVL), and 288–308 (IGVV…PLVV). Positions 902 to 937 (ATGPAPANLPDGQPAAQPPNGQQPAAQTPGNQAGRA) are enriched in low complexity. Residues 902-979 (ATGPAPANLP…MSGLQDAQRS (78 aa)) form a disordered region.

Belongs to the UPF0182 family.

It localises to the cell membrane. The sequence is that of UPF0182 protein Mkms_1433 from Mycobacterium sp. (strain KMS).